A 351-amino-acid polypeptide reads, in one-letter code: C(7)-cyclitol 7-kinase (351 aa).

This sequence belongs to the ROK (NagC/XylR) family.

It carries out the reaction valienone + ATP = valienone 7-phosphate + ADP + H(+). It catalyses the reaction validone + ATP = validone 7-phosphate + ADP + H(+). Involved in the biosynthesis of the antifungal agent validamycin A. Catalyzes the phosphorylation of valienone and validone to their 7-phosphate derivatives. This chain is C(7)-cyclitol 7-kinase, found in Streptomyces hygroscopicus subsp. jinggangensis (strain 5008).